The following is a 675-amino-acid chain: Protein brown (675 aa).

At 1–419 the chain is on the cytoplasmic side; sequence MQESGGSSGQ…TEDLRNIRSG (419 aa). The ABC transporter domain maps to 34–261; that stretch reads YSFWNECRKK…EVVAESHESL (228 aa). 66–73 provides a ligand contact to ATP; it reads GGSGAGKT. Positions 229-249 are disordered; sequence EDSFETPSGESSASGSGSKSI. The segment covering 236–248 has biased composition (low complexity); sequence SGESSASGSGSKS. A helical membrane pass occupies residues 420 to 440; that stretch reads LIAFGFFMITAVTLSLMYSGI. At 441–460 the chain is on the extracellular side; the sequence is GGLTQRTVQDVGGSIFMLSN. The chain crosses the membrane as a helical span at residues 461–481; it reads EMIFTFSYGVTYIFPAALPII. The Cytoplasmic portion of the chain corresponds to 482–497; that stretch reads RREVGEGTYSLSAYYV. A helical transmembrane segment spans residues 498 to 518; sequence ALVLSFVPVAFFKGYVFLSVI. Topologically, residues 519-531 are extracellular; sequence YASIYYTRGFLLY. A helical transmembrane segment spans residues 532–552; it reads LSMGFLMSLSAVAAVGYGVFL. Residues 553–568 are Cytoplasmic-facing; it reads SSLFESDKMASECAAP. A helical transmembrane segment spans residues 569-589; it reads FDLIFLIFGGTYMNVDTVPGL. The Extracellular portion of the chain corresponds to 590-644; the sequence is KYLSLFFYSNEALMYKFWIDIDNIDCPVNEDHPCIKTGVEVLQQGSYRNADYTYW. A helical membrane pass occupies residues 645 to 665; the sequence is LDCFSLVVVAVIFHIVSFGLV. Residues 666–675 are Cytoplasmic-facing; the sequence is RRYIHRSGYY.

The protein belongs to the ABC transporter superfamily. ABCG family. Eye pigment precursor importer (TC 3.A.1.204) subfamily. May form a heterodimer with w/white.

It is found in the membrane. The catalysed reaction is guanine(out) + ATP + H2O = guanine(in) + ADP + phosphate + H(+). It catalyses the reaction riboflavin(in) + ATP + H2O = riboflavin(out) + ADP + phosphate + H(+). The enzyme catalyses (6S)-5,6,7,8-tetrahydrofolate(out) + ATP + H2O = (6S)-5,6,7,8-tetrahydrofolate(in) + ADP + phosphate + H(+). ATP-dependent transporter of the ATP-binding cassette (ABC) family which transports various molecules including bioamines, neurotransmitters and metabolic intermediates. In the eye and probably in association with w/white, required for the transport of the eye red pigment precursor, guanine, into pigment cell granules. In Malpighian tubules, involved in guanine uptake. Probably in association with w/white, involved in aging-induced intestinal stem cell proliferation in the midgut by regulating tetrahydrofolate transport. The protein is Protein brown of Drosophila melanogaster (Fruit fly).